We begin with the raw amino-acid sequence, 226 residues long: PDGF-related-transforming protein sis (226 aa).

Over residues 201–215 (RRPPKGKHRKCKHTH) the composition is skewed to basic residues. The tract at residues 201-226 (RRPPKGKHRKCKHTHDKTALKETLGA) is disordered.

It belongs to the PDGF/VEGF growth factor family.

This is PDGF-related-transforming protein sis (V-SIS) from Woolly monkey sarcoma virus (WMSV).